The following is a 285-amino-acid chain: MKEREEIVNSDILEEFATYLELEGKSKNTIRMYTYYLSKFFEEGYSPTARDALKFLAKLRKSGYSIRSLNLVIQALKSYFKFEGLDSEAEKLKNPKIPKSLPKSLTEDEVKKIVSVADNLRDKLILLLLYGAGLRVSELCNLKIEDVNFEKSFLIVRGGKGGKDRVIPISKTLLFEIERYLKTRKDNSPYLFVEKRRNRKDKLSPKTVWMLVKKYGKKVGLNVTPHQLRHSFATHMLERGVDIRIIQELLGHANLSTTQIYTKVTTKHLREAIEKAKLIETILGG.

One can recognise a Core-binding (CB) domain in the interval 7–84; it reads IVNSDILEEF…ALKSYFKFEG (78 aa). Positions 100-274 constitute a Tyr recombinase domain; sequence SLPKSLTEDE…TTKHLREAIE (175 aa). Catalysis depends on residues R135, K160, H226, R229, and H252. Catalysis depends on Y261, which acts as the O-(3'-phospho-DNA)-tyrosine intermediate.

This sequence belongs to the 'phage' integrase family. XerA subfamily.

The protein localises to the cytoplasm. In terms of biological role, site-specific tyrosine recombinase, which acts by catalyzing the cutting and rejoining of the recombining DNA molecules. The sequence is that of Tyrosine recombinase XerA from Pyrococcus horikoshii (strain ATCC 700860 / DSM 12428 / JCM 9974 / NBRC 100139 / OT-3).